A 212-amino-acid chain; its full sequence is Transcription factor MYB8 (212 aa).

HTH myb-type domains lie at Lys-9 to Leu-61 and Arg-62 to Leu-116. 2 consecutive DNA-binding regions (H-T-H motif) follow at residues Trp-37–Leu-61 and Trp-89–Ile-112.

It is found in the nucleus. Functionally, transcription activator. This Arabidopsis thaliana (Mouse-ear cress) protein is Transcription factor MYB8.